Consider the following 588-residue polypeptide: 3-methylmercaptopropionyl-CoA dehydrogenase (588 aa).

Glu435 acts as the Proton acceptor in catalysis.

It belongs to the acyl-CoA dehydrogenase family. Requires FAD as cofactor.

It carries out the reaction 3-(methylsulfanyl)propanoyl-CoA + oxidized [electron-transfer flavoprotein] + H(+) = 3-(methylsulfanyl)acryloyl-CoA + reduced [electron-transfer flavoprotein]. In terms of biological role, involved in the assimilation of dimethylsulphoniopropionate (DMSP), an important compound in the fixation of carbon in marine phytoplankton, by mediating the conversion of 3-(methylthio)propanoyl-CoA (MMPA-CoA) to 3-(methylthio)acryloyl-CoA (MTA-CoA). The sequence is that of 3-methylmercaptopropionyl-CoA dehydrogenase from Ruegeria pomeroyi (strain ATCC 700808 / DSM 15171 / DSS-3) (Silicibacter pomeroyi).